Consider the following 424-residue polypeptide: Cyclin-dependent kinase D-1 (424 aa).

Residues 19 to 299 enclose the Protein kinase domain; that stretch reads YLKREVLGEG…AQQALEHRYF (281 aa). ATP contacts are provided by residues 25–33 and lysine 48; that span reads LGEGTYGVV. Position 29 is a phosphothreonine (threonine 29). Phosphotyrosine is present on tyrosine 30. Aspartate 141 (proton acceptor) is an active-site residue. At serine 168 the chain carries Phosphoserine. A Phosphothreonine modification is found at threonine 174. Disordered stretches follow at residues 303–337 and 359–424; these read PAPTKPSQLPRPPPKGDSGNNKIPDLNLQDGPVVL and ADRT…GYTE. Residues 359 to 374 are compositionally biased toward basic and acidic residues; that stretch reads ADRTEEHPSGARHMDD.

It belongs to the protein kinase superfamily. CMGC Ser/Thr protein kinase family. CDC2/CDKX subfamily. As to quaternary structure, interacts with CYCH1-1. In terms of tissue distribution, expressed in actively dividing cells of roots, leaves and shoots. Expressed in the intercalary meristem and the elongation zone of internodes.

The protein localises to the nucleus. The enzyme catalyses L-seryl-[protein] + ATP = O-phospho-L-seryl-[protein] + ADP + H(+). It catalyses the reaction L-threonyl-[protein] + ATP = O-phospho-L-threonyl-[protein] + ADP + H(+). The catalysed reaction is [DNA-directed RNA polymerase] + ATP = phospho-[DNA-directed RNA polymerase] + ADP + H(+). In terms of biological role, CDK-activating kinase that may control G1/S phase progression. May control the rate of cell differentiation to accomplish proper development of organs, or in response to a changing environment. Forms a complex with cyclin CYCH1-1 that phosphorylates CDKA-1 and the C-terminal domain (CTD) of the large subunit of RNA polymerase II. The polypeptide is Cyclin-dependent kinase D-1 (CDKD-1) (Oryza sativa subsp. japonica (Rice)).